Reading from the N-terminus, the 292-residue chain is MSIISTKYLLQDAQAKGYAVPAFNIHNAETIQAILEVCSEMRSPVILAGTPGTFKHIALEEIYALCSAYSISYDMPLALHLDHHESLDDIRRKVNAGVRSAMIDGSHFPFEQNVTLVKSVVDFCHLNDCSVEAELGRLGGMEDDMSVDAESAFLTDPQEAKRFVELTGVDSLAVAIGTAHGLYTKRPKIDFQRLAEIRDVVDIPLVLHGASDVPDEFVRRTIELGVCKVNVATELKIAFSAAVKEWFNENPQGNDPRFYMRVGMDAMKEVVKNKINVCGSANKLVLDSAVVL.

Asp-82 functions as the Proton donor in the catalytic mechanism. Positions 83 and 180 each coordinate Zn(2+). A dihydroxyacetone phosphate-binding site is contributed by Gly-181. Residue His-208 coordinates Zn(2+). Dihydroxyacetone phosphate contacts are provided by residues 209–211 and 230–233; these read GAS and NVAT.

It belongs to the class II fructose-bisphosphate aldolase family. TagBP aldolase KbaY subfamily. As to quaternary structure, homotetramer. Forms a complex with KbaZ. Requires Zn(2+) as cofactor.

It catalyses the reaction D-tagatofuranose 1,6-bisphosphate = D-glyceraldehyde 3-phosphate + dihydroxyacetone phosphate. It functions in the pathway carbohydrate metabolism; D-tagatose 6-phosphate degradation; D-glyceraldehyde 3-phosphate and glycerone phosphate from D-tagatose 6-phosphate: step 2/2. Catalytic subunit of the tagatose-1,6-bisphosphate aldolase KbaYZ, which catalyzes the reversible aldol condensation of dihydroxyacetone phosphate (DHAP or glycerone-phosphate) with glyceraldehyde 3-phosphate (G3P) to produce tagatose 1,6-bisphosphate (TBP). Requires KbaZ subunit for full activity and stability. The protein is D-tagatose-1,6-bisphosphate aldolase subunit KbaY of Enterobacter sp. (strain 638).